Consider the following 336-residue polypeptide: Large ribosomal subunit protein uL10 (336 aa).

A disordered region spans residues 305 to 336; it reads AVVATEEAPKAETKKEEKKEEAAPAAGLGLLF. Basic and acidic residues predominate over residues 311–326; the sequence is EAPKAETKKEEKKEEA.

It belongs to the universal ribosomal protein uL10 family. In terms of assembly, part of the 50S ribosomal subunit. Forms part of the ribosomal stalk which helps the ribosome interact with GTP-bound translation factors. Forms a heptameric L10(L12)2(L12)2(L12)2 complex, where L10 forms an elongated spine to which the L12 dimers bind in a sequential fashion.

Functionally, forms part of the ribosomal stalk, playing a central role in the interaction of the ribosome with GTP-bound translation factors. In Methanococcus vannielii (strain ATCC 35089 / DSM 1224 / JCM 13029 / OCM 148 / SB), this protein is Large ribosomal subunit protein uL10.